We begin with the raw amino-acid sequence, 351 residues long: Protein FAM118B (351 aa).

N-acetylalanine is present on alanine 2. Serine 9 carries the post-translational modification Phosphoserine.

It belongs to the FAM118 family.

It is found in the nucleus. It localises to the cajal body. Its function is as follows. May play a role in Cajal bodies formation. In Homo sapiens (Human), this protein is Protein FAM118B (FAM118B).